Here is a 106-residue protein sequence, read N- to C-terminus: Iron-sulfur cluster assembly protein CyaY (106 aa).

The protein belongs to the frataxin family.

Involved in iron-sulfur (Fe-S) cluster assembly. May act as a regulator of Fe-S biogenesis. The chain is Iron-sulfur cluster assembly protein CyaY from Pectobacterium atrosepticum (strain SCRI 1043 / ATCC BAA-672) (Erwinia carotovora subsp. atroseptica).